A 486-amino-acid chain; its full sequence is MVMQFQGLENPIQISPHCSCTPSGFFMEMMSMKPAKGVLTEQVAGPLGQNLEVEPYSQYSNVQFPQVQPQISSSSYYSNLGFYPQQPEEWYSPGIYELRRMPAETLYQGETEVAEMPVTKKPRMGASAGRIKGDELCVVCGDRASGYHYNALTCEGCKGFFRRSITKNAVYKCKNGGNCVMDMYMRRKCQECRLRKCKEMGMLAECMYTGLLTEIQCKSKRLRKNVKQHADQTVNEDSEGRDLRQVTSTTKSCREKTELTPDQQTLLHFIMDSYNKQRMPQEITNKILKEEFSAEENFLILTEMATNHVQVLVEFTKKLPGFQTLDHEDQIALLKGSAVEAMFLRSAEIFNKKLPSGHSDLLEERIRNSGISDEYITPMFSFYKSIGELKMTQEEYALLTAIVILSPDRQYIKDREAVEKLQEPLLDVLQKLCKIHQPENPQHFACLLGRLTELRTFNHHHAEMLMSWRVNDHKFTPLLCEIWDVQ.

A Glycyl lysine isopeptide (Lys-Gly) (interchain with G-Cter in SUMO1) cross-link involves residue K132. The segment at residues 134–209 (DELCVVCGDR…MGMLAECMYT (76 aa)) is a DNA-binding region (nuclear receptor). An NR C4-type zinc finger spans residues 137-157 (CVVCGDRASGYHYNALTCEGC). Residues S145 and S164 each carry the phosphoserine; by PKC/PRKCA modification. Residue K167 is modified to N6-acetyllysine; by EP300. An NR C4-type zinc finger spans residues 173 to 197 (CKNGGNCVMDMYMRRKCQECRLRKC). Position 220 is an N6-methyllysine; by SETD7 (K220). K227 bears the N6-acetyllysine; by EP300 mark. Residues 262–486 (DQQTLLHFIM…PLLCEIWDVQ (225 aa)) form the NR LBD domain. K289 is covalently cross-linked (Glycyl lysine isopeptide (Lys-Gly) (interchain with G-Cter in SUMO1)). The chenodeoxycholate site is built by R345, Y375, and Y383. A Phosphothreonine; by PKC/PRKCZ modification is found at T456. H461 contacts chenodeoxycholate.

The protein belongs to the nuclear hormone receptor family. NR1 subfamily. As to quaternary structure, heterodimer (via C-terminus) with RXRA (via DBD); the heterodimerization enhances the binding affinity for LXXLL motifs from coactivators. Binds DNA predominantly as a heterodimer with RXRA. After activation by agonist binding interacts with coactivators. Interacts with NCOA1, NCOA2, PPARGC1A, CARM1, SETD7, PRMT1, GPS2, SMARCA4 and MED1. Interacts with EP300 and SMARCD1. Interacts with XRCC5 and XRCC6; decreasing NR1H4/FXR transactivation activity towards ABCB11/BSEP. Interacts with PAGR1 and NCOA6; indicative for an association with an MLL2/MLL3 complex (ASCOM). Acetylated by EP300. Lys-227 as is the major acetylation site for EP300; the dynamicly regulated acetylation inhibits heterodimerization with RXRA and transactivation activity. Deacetylated by SIRT1. In terms of processing, methylation may increase transactivation of target genes. Post-translationally, phosphorylation by PKC/PRKCA increases transactivation activity by promoting association with PPARGC1A. Sumoylated upon ligand binding. In terms of tissue distribution, liver and hepatocyte-related cells express mainly FXRalpha1-type isoforms with isoform 3 and isoform 4 in approximately equal proportions. In intestine and kidney mainly FXRalpha2-type isoforms are expressed with isoform 1 and isoform 2 in approximately equal proportions. Expressed in pancreatic beta cells and macrophages.

It localises to the nucleus. Ligand-activated transcription factor. Receptor for bile acids (BAs) such as chenodeoxycholic acid (CDCA), lithocholic acid, deoxycholic acid (DCA) and allocholic acid (ACA). Plays a essential role in BA homeostasis through the regulation of genes involved in BA synthesis, conjugation and enterohepatic circulation. Also regulates lipid and glucose homeostasis and is involved innate immune response. The FXR-RXR heterodimer binds predominantly to farnesoid X receptor response elements (FXREs) containing two inverted repeats of the consensus sequence 5'-AGGTCA-3' in which the monomers are spaced by 1 nucleotide (IR-1) but also to tandem repeat DR1 sites with lower affinity, and can be activated by either FXR or RXR-specific ligands. It is proposed that monomeric nuclear receptors such as NR5A2/LRH-1 bound to coregulatory nuclear responsive element (NRE) halfsites located in close proximity to FXREs modulate transcriptional activity. In the liver activates transcription of the corepressor NR0B2 thereby indirectly inhibiting CYP7A1 and CYP8B1 (involved in BA synthesis) implicating at least in part histone demethylase KDM1A resulting in epigenomic repression, and SLC10A1/NTCP (involved in hepatic uptake of conjugated BAs). Activates transcription of the repressor MAFG (involved in regulation of BA synthesis). Activates transcription of SLC27A5/BACS and BAAT (involved in BA conjugation), ABCB11/BSEP (involved in bile salt export) by directly recruiting histone methyltransferase CARM1, and ABCC2/MRP2 (involved in secretion of conjugated BAs) and ABCB4 (involved in secretion of phosphatidylcholine in the small intestine). Activates transcription of SLC27A5/BACS and BAAT (involved in BA conjugation), ABCB11/BSEP (involved in bile salt export) by directly recruiting histone methyltransferase CARM1, and ABCC2/MRP2 (involved in secretion of conjugated BAs) and ABCB4 (involved in secretion of phosphatidylcholine in the small intestine). In the intestine activates FGF19 expression and secretion leading to hepatic CYP7A1 repression. The function also involves the coordinated induction of hepatic KLB/beta-klotho expression. Regulates transcription of liver UGT2B4 and SULT2A1 involved in BA detoxification; binding to the UGT2B4 promoter seems to imply a monomeric transactivation independent of RXRA. Modulates lipid homeostasis by activating liver NR0B2/SHP-mediated repression of SREBF1 (involved in de novo lipogenesis), expression of PLTP (involved in HDL formation), SCARB1 (involved in HDL hepatic uptake), APOE, APOC1, APOC4, PPARA (involved in beta-oxidation of fatty acids), VLDLR and SDC1 (involved in the hepatic uptake of LDL and IDL remnants), and inhibiting expression of MTTP (involved in VLDL assembly. Increases expression of APOC2 (promoting lipoprotein lipase activity implicated in triglyceride clearance). Transrepresses APOA1 involving a monomeric competition with NR2A1 for binding to a DR1 element. Also reduces triglyceride clearance by inhibiting expression of ANGPTL3 and APOC3 (both involved in inhibition of lipoprotein lipase). Involved in glucose homeostasis by modulating hepatic gluconeogenesis through activation of NR0B2/SHP-mediated repression of respective genes. Modulates glycogen synthesis (inducing phosphorylation of glycogen synthase kinase-3). Modulates glucose-stimulated insulin secretion and is involved in insulin resistance. Involved in intestinal innate immunity. Plays a role in protecting the distal small intestine against bacterial overgrowth and preservation of the epithelial barrier. Down-regulates inflammatory cytokine expression in several types of immune cells including macrophages and mononuclear cells. Mediates trans-repression of TLR4-induced cytokine expression; the function seems to require its sumoylation and prevents N-CoR nuclear receptor corepressor clearance from target genes such as IL1B and NOS2. Involved in the TLR9-mediated protective mechanism in intestinal inflammation. Plays an anti-inflammatory role in liver inflammation; proposed to inhibit pro-inflammatory (but not antiapoptotic) NF-kappa-B signaling). In terms of biological role, promotes transcriptional activation of target genes NR0B2/SHP (inducible by unconjugated CDCA), SLC51B/OSTB (inducible by unconjugated CDCA and DCA) and FABP6/IBAP; low activity for ABCB11/BSEP (inducible by unconjugated CDCA, DCA and ACA); not inducible by taurine- and glycine-amidated CDCA. Functionally, promotes transcriptional activation of target genes ABCB11/BSEP (inducible by unconjugated CDCA, DCA and ACA), NR0B2/SHP (inducible by unconjugated CDCA DCA and ACA), SLC51B/OSTB (inducible by unconjugated CDCA and DCA) and FABP6/IBAP; not inducible by taurine- and glycine-amidated CDCA. Its function is as follows. Promotes transcriptional activation of target genes NR0B2/SHP (inducible by unconjugated CDCA), SLC51B/OSTB (inducible by unconjugated CDCA and DCA) and IBAP; low activity for ABCB11/BSEP (inducible by unconjugated CDCA, DCA and ACA); not inducible by taurine- and glycine-amidated CDCA. Promotes transcriptional activation of target genes ABCB11/BSEP (inducible by unconjugated CDCA, ACA and DCA), NR0B2/SHP (inducible by unconjugated CDCA, ACA and DCA), SLC51B/OSTB (inducible by unconjugated CDCA and DCA) and FABP6/IBAP; most efficient isoform compared to isoforms 1 to 3; not inducible by taurine- and glycine-amidated CDCA. The chain is Bile acid receptor (NR1H4) from Homo sapiens (Human).